A 123-amino-acid polypeptide reads, in one-letter code: Putative iron-sulfur cluster insertion protein ErpA (123 aa).

Iron-sulfur cluster is bound by residues Cys-51, Cys-115, and Cys-117.

It belongs to the HesB/IscA family. Homodimer. Iron-sulfur cluster serves as cofactor.

Its function is as follows. Required for insertion of 4Fe-4S clusters. This Bordetella bronchiseptica (strain ATCC BAA-588 / NCTC 13252 / RB50) (Alcaligenes bronchisepticus) protein is Putative iron-sulfur cluster insertion protein ErpA.